A 213-amino-acid polypeptide reads, in one-letter code: Uridine kinase (213 aa).

12–19 (GGSCSGKT) contacts ATP.

The protein belongs to the uridine kinase family.

It localises to the cytoplasm. The catalysed reaction is uridine + ATP = UMP + ADP + H(+). It catalyses the reaction cytidine + ATP = CMP + ADP + H(+). It functions in the pathway pyrimidine metabolism; CTP biosynthesis via salvage pathway; CTP from cytidine: step 1/3. It participates in pyrimidine metabolism; UMP biosynthesis via salvage pathway; UMP from uridine: step 1/1. The chain is Uridine kinase (udk) from Mycoplasma genitalium (strain ATCC 33530 / DSM 19775 / NCTC 10195 / G37) (Mycoplasmoides genitalium).